Consider the following 445-residue polypeptide: UPF0210 protein Ccon26_06850 (445 aa).

The protein belongs to the UPF0210 family. In terms of assembly, homodimer.

The polypeptide is UPF0210 protein Ccon26_06850 (Campylobacter concisus (strain 13826)).